Consider the following 357-residue polypeptide: Geranylgeranyl pyrophosphate synthase 11, chloroplastic (357 aa).

The transit peptide at 1 to 37 (MATTLSSSSLFIQFRGRRYNSLSSFNNLQKRTVLSLS) directs the protein to the chloroplast. 3 residues coordinate isopentenyl diphosphate: K103, R106, and H135. 2 residues coordinate Mg(2+): D142 and D148. Residue R153 coordinates dimethylallyl diphosphate. R154 is an isopentenyl diphosphate binding site. Dimethylallyl diphosphate contacts are provided by K242, T243, Q280, K297, and K307.

This sequence belongs to the FPP/GGPP synthase family. In terms of assembly, monomer. It depends on Mg(2+) as a cofactor.

The protein resides in the plastid. Its subcellular location is the chloroplast. The enzyme catalyses isopentenyl diphosphate + dimethylallyl diphosphate = (2E)-geranyl diphosphate + diphosphate. The catalysed reaction is isopentenyl diphosphate + (2E)-geranyl diphosphate = (2E,6E)-farnesyl diphosphate + diphosphate. It carries out the reaction isopentenyl diphosphate + (2E,6E)-farnesyl diphosphate = (2E,6E,10E)-geranylgeranyl diphosphate + diphosphate. The protein operates within isoprenoid biosynthesis; farnesyl diphosphate biosynthesis; farnesyl diphosphate from geranyl diphosphate and isopentenyl diphosphate: step 1/1. It functions in the pathway isoprenoid biosynthesis; geranyl diphosphate biosynthesis; geranyl diphosphate from dimethylallyl diphosphate and isopentenyl diphosphate: step 1/1. It participates in isoprenoid biosynthesis; geranylgeranyl diphosphate biosynthesis; geranylgeranyl diphosphate from farnesyl diphosphate and isopentenyl diphosphate: step 1/1. Functionally, catalyzes the trans-addition of the three molecules of IPP onto DMAPP to form geranylgeranyl pyrophosphate. The polypeptide is Geranylgeranyl pyrophosphate synthase 11, chloroplastic (Arabidopsis thaliana (Mouse-ear cress)).